A 333-amino-acid chain; its full sequence is Beta-ketoacyl-[acyl-carrier-protein] synthase III (333 aa).

Catalysis depends on residues Cys117 and His257. The tract at residues 258–262 (QANLR) is ACP-binding. Asn287 is an active-site residue.

The protein belongs to the thiolase-like superfamily. FabH family. As to quaternary structure, homodimer.

The protein resides in the cytoplasm. The catalysed reaction is malonyl-[ACP] + acetyl-CoA + H(+) = 3-oxobutanoyl-[ACP] + CO2 + CoA. It functions in the pathway lipid metabolism; fatty acid biosynthesis. Its function is as follows. Catalyzes the condensation reaction of fatty acid synthesis by the addition to an acyl acceptor of two carbons from malonyl-ACP. Catalyzes the first condensation reaction which initiates fatty acid synthesis and may therefore play a role in governing the total rate of fatty acid production. Possesses both acetoacetyl-ACP synthase and acetyl transacylase activities. Its substrate specificity determines the biosynthesis of branched-chain and/or straight-chain of fatty acids. This is Beta-ketoacyl-[acyl-carrier-protein] synthase III from Azobacteroides pseudotrichonymphae genomovar. CFP2.